The chain runs to 283 residues: uncharacterized protein (283 aa).

Transmembrane regions (helical) follow at residues 18–38 (VYDI…AKLI), 61–81 (VIYF…LGLD), and 94–114 (IVLG…IFLI).

The protein belongs to the MscS (TC 1.A.23) family.

It is found in the cell membrane. This is an uncharacterized protein from Archaeoglobus fulgidus (strain ATCC 49558 / DSM 4304 / JCM 9628 / NBRC 100126 / VC-16).